Reading from the N-terminus, the 503-residue chain is MGIIIGLIIVSVALIISLCSLLYILTSKSQKVLNEKKIKEAKNERKKILSDTYREINEQKKSFEENLQFEKNKLEIAKQNIENENNLLIKERAIIIKQQEAIDVKNTDLDKRIKNYSDKREELIKRLEIISNMTSFEAKAELMKNVESKIQYEIVSQIKQAENLAHARAKELSNNIILSAMERFKTDIVNEKTTNLVKLPNDDIKGWIIGKDGRNLKTFEQLAGVEIIVDDTPEVVTISSFNPIRREIATKTLEKLLIDKRIQPIKIEKELKVQEKLIDETILEIGYQVMDELGIHDMDKELVKLVGKLKYRTSYGQNVLLHSVEVAKIASSIASELGLNAKQALRAGLLHDIGKAIDFEKTGSHVFLGVEVARKYGEDEVIINSIEAHHEDVAKESEIAVIVAIADAISASKPGARNNSIEDFIVRMKEIEKIGNSIPGISKTYAFQAGRQIRVIVDPVTTDDKDLAGILETLKNDLKNSVIIPGEITITAIREKREILVFN.

A helical membrane pass occupies residues 2 to 22 (GIIIGLIIVSVALIISLCSLL). Positions 193 to 253 (TTNLVKLPND…IRREIATKTL (61 aa)) constitute a KH domain. The HD domain maps to 319–412 (VLLHSVEVAK…VAIADAISAS (94 aa)).

This sequence belongs to the RNase Y family.

The protein resides in the cell membrane. In terms of biological role, endoribonuclease that initiates mRNA decay. The polypeptide is Ribonuclease Y (Mesoplasma florum (strain ATCC 33453 / NBRC 100688 / NCTC 11704 / L1) (Acholeplasma florum)).